We begin with the raw amino-acid sequence, 320 residues long: o-succinylbenzoate synthase (320 aa).

Residue Lys133 is the Proton donor of the active site. The Mg(2+) site is built by Asp161, Glu190, and Asp213. Lys235 acts as the Proton acceptor in catalysis.

This sequence belongs to the mandelate racemase/muconate lactonizing enzyme family. MenC type 1 subfamily. A divalent metal cation is required as a cofactor.

It carries out the reaction (1R,6R)-6-hydroxy-2-succinyl-cyclohexa-2,4-diene-1-carboxylate = 2-succinylbenzoate + H2O. Its pathway is quinol/quinone metabolism; 1,4-dihydroxy-2-naphthoate biosynthesis; 1,4-dihydroxy-2-naphthoate from chorismate: step 4/7. It functions in the pathway quinol/quinone metabolism; menaquinone biosynthesis. In terms of biological role, converts 2-succinyl-6-hydroxy-2,4-cyclohexadiene-1-carboxylate (SHCHC) to 2-succinylbenzoate (OSB). This chain is o-succinylbenzoate synthase, found in Escherichia coli O6:K15:H31 (strain 536 / UPEC).